Reading from the N-terminus, the 192-residue chain is Cytidylate kinase (192 aa).

Position 7 to 15 (7 to 15) interacts with ATP; it reads GPAGSGKST.

The protein belongs to the cytidylate kinase family. Type 2 subfamily.

Its subcellular location is the cytoplasm. The catalysed reaction is CMP + ATP = CDP + ADP. The enzyme catalyses dCMP + ATP = dCDP + ADP. This is Cytidylate kinase from Natronomonas pharaonis (strain ATCC 35678 / DSM 2160 / CIP 103997 / JCM 8858 / NBRC 14720 / NCIMB 2260 / Gabara) (Halobacterium pharaonis).